The following is a 214-amino-acid chain: MERRQAKIHVFVLIGLILLNSINQISSLSVTVNDEECVQEYVLYEGDTVSGNFVVVDHDIFWGSDHPGLDFTVTSPAGNIVQTLKGTSGDKFEFKAPKSGMYKFCFHNPYSTPETVSFYIHVGHIPNEHDLAKDEHLDPVNVKIAELREALESVVAEQKYLKARDTRHRHTNESTRKRVIFYTVGEYIFLAAASGLQVLYIRKLFSKSVAYNRV.

Residues 1–27 (MERRQAKIHVFVLIGLILLNSINQISS) form the signal peptide. Residues 28–178 (LSVTVNDEEC…RHTNESTRKR (151 aa)) lie on the Lumenal side of the membrane. The region spanning 35 to 122 (EECVQEYVLY…PETVSFYIHV (88 aa)) is the GOLD domain. Positions 140-158 (VNVKIAELREALESVVAEQ) form a coiled coil. 2 positions are modified to omega-N-methylated arginine: arginine 164 and arginine 169. An N-linked (GlcNAc...) asparagine glycan is attached at asparagine 172. Residues 179 to 199 (VIFYTVGEYIFLAAASGLQVL) form a helical membrane-spanning segment. Over 200–214 (YIRKLFSKSVAYNRV) the chain is Cytoplasmic. Positions 204–205 (LF) match the COPII vesicle coat-binding motif. Positions 204–214 (LFSKSVAYNRV) match the COPI vesicle coat-binding motif. Residues 213–214 (RV) carry the Required for the export from the endoplasmic reticulum to the Golgi motif.

It belongs to the EMP24/GP25L family. As to quaternary structure, probably oligomerizes with other members of the EMP24/GP25L family. Associates with the COPI vesicle coat (coatomer). Associates with the COPII vesicle coat (coatomer).

It localises to the golgi apparatus. Its subcellular location is the cis-Golgi network membrane. The protein localises to the golgi stack membrane. Involved in vesicular protein trafficking. Mainly functions in the early secretory pathway but also in post-Golgi membranes. Thought to act as cargo receptor at the lumenal side for incorporation of secretory cargo molecules into transport vesicles and to be involved in vesicle coat formation at the cytoplasmic side. The protein is Transmembrane emp24 domain-containing protein p24beta3 of Arabidopsis thaliana (Mouse-ear cress).